A 255-amino-acid polypeptide reads, in one-letter code: MNILLSNDDGVHSPGLLALKCQLEQLGCVTVVAPERNWSAGSHSRTLFAPLRVNEVQLADGSPALACDGSPADCVGLALLGVMDHRPDLVVSGINLGANLGHDVLYSGTVAAAMEGLVVGIRSIAVSLVDGYKPGSDFSVAADWARRIAATAMELQLPSDILLNVNVPQGSAEIVNDAKVTRLGHRIYRDELIKRLDPRGRPYYWVGGAAPDGKPDDGTDFGAVANNHVSITPLHFDMTNLDWVQRLSTAIWNNA.

The a divalent metal cation site is built by Asp-8, Asp-9, Ser-39, and Asn-95.

The protein belongs to the SurE nucleotidase family. It depends on a divalent metal cation as a cofactor.

The protein resides in the cytoplasm. The enzyme catalyses a ribonucleoside 5'-phosphate + H2O = a ribonucleoside + phosphate. Nucleotidase that shows phosphatase activity on nucleoside 5'-monophosphates. This chain is 5'-nucleotidase SurE, found in Herpetosiphon aurantiacus (strain ATCC 23779 / DSM 785 / 114-95).